Consider the following 441-residue polypeptide: Glutamate-1-semialdehyde 2,1-aminomutase (441 aa).

An N6-(pyridoxal phosphate)lysine modification is found at K279.

This sequence belongs to the class-III pyridoxal-phosphate-dependent aminotransferase family. HemL subfamily. As to quaternary structure, homodimer. It depends on pyridoxal 5'-phosphate as a cofactor.

It localises to the cytoplasm. The enzyme catalyses (S)-4-amino-5-oxopentanoate = 5-aminolevulinate. It functions in the pathway porphyrin-containing compound metabolism; protoporphyrin-IX biosynthesis; 5-aminolevulinate from L-glutamyl-tRNA(Glu): step 2/2. This chain is Glutamate-1-semialdehyde 2,1-aminomutase, found in Leptospira borgpetersenii serovar Hardjo-bovis (strain JB197).